The sequence spans 106 residues: uncharacterized protein (106 aa).

A run of 2 helical transmembrane segments spans residues 46-68 (LLQEIILFVFCALMVVSAAILAF) and 73-92 (AVFIVLQVCVLAVLPILIAA).

The protein localises to the cell membrane. This is an uncharacterized protein from Bacillus subtilis (strain 168).